Consider the following 691-residue polypeptide: MARTQAEPPASQPDARAAWLRDQLERANYAYYVLDQPDLPDAEYDRLFRELQQLETDHPELVTPDSPTQRVGGEAAGGFTPVVHDAPMLSLNNGFADEDIAAFDKRVADALDKTTDLAGSVTEPVEYACELKFDGLAISLRYEQGVFVQASTRGDGTTGEDVTENVRTIRSIPLKLKGKHVPAVLDVRGEVLMFKRDFARLNERQRAAEQREFANPRNAAAGSLRQLDSKITAQRPLSFFAYGIGVLDGMPMLDTHSALLDWYESLGLPVNREREVVQGAEGLLGFFRKIGEKRESLPYDIDGVVYKVNRRDEQERLGFVSRAPRFALAHKFPAQEALTKLVAIDVQVGRTGAITPVARLEPVFVGGATVTNATLHNEDEVRRKDIRIGDTVIVRRAGDVIPEVVGALLDRRPADAAEFVMPTECPVCGSKIERLPDEAIARCTGGLFCPAQRKQALWHFAQRRALDIDGLGEKIIDQLVELNLVRTPADLFNLGFATLAELDRFAEKSAQNLLDSLEKAKHTTLARFIYGLGIRHVGESTAKDLAKHFGSLTPIMDASIEELLEVNDVGPIVAESLHQFFAEEHNRTVIEQLRAPGKVTWPEGPPAPKAPQGVLAGKTVVLTGTLPTLTRDAAKEMLEAAGAKVAGSVSKKTDYVVAGAEAGSKLVKAEELGIPVLDEDGLHQLLEGNTP.

NAD(+) is bound by residues 41–45, 90–91, and Glu130; these read DAEYD and SL. The active-site N6-AMP-lysine intermediate is the Lys132. NAD(+) contacts are provided by Arg153, Glu190, Lys307, and Lys331. Residues Cys425, Cys428, Cys443, and Cys449 each contribute to the Zn(2+) site. In terms of domain architecture, BRCT spans 610 to 691; it reads APQGVLAGKT…LHQLLEGNTP (82 aa).

Belongs to the NAD-dependent DNA ligase family. LigA subfamily. Mg(2+) serves as cofactor. It depends on Mn(2+) as a cofactor.

The catalysed reaction is NAD(+) + (deoxyribonucleotide)n-3'-hydroxyl + 5'-phospho-(deoxyribonucleotide)m = (deoxyribonucleotide)n+m + AMP + beta-nicotinamide D-nucleotide.. Its function is as follows. DNA ligase that catalyzes the formation of phosphodiester linkages between 5'-phosphoryl and 3'-hydroxyl groups in double-stranded DNA using NAD as a coenzyme and as the energy source for the reaction. It is essential for DNA replication and repair of damaged DNA. This is DNA ligase from Burkholderia lata (strain ATCC 17760 / DSM 23089 / LMG 22485 / NCIMB 9086 / R18194 / 383).